Here is a 99-residue protein sequence, read N- to C-terminus: UPF0751 protein BAMEG_A0107 (99 aa).

Belongs to the UPF0751 family.

The protein is UPF0751 protein BAMEG_A0107 of Bacillus anthracis (strain CDC 684 / NRRL 3495).